Reading from the N-terminus, the 558-residue chain is Arginine--tRNA ligase (558 aa).

The short motif at 134-144 (ANPTGPMVLVQ) is the 'HIGH' region element.

It belongs to the class-I aminoacyl-tRNA synthetase family. As to quaternary structure, monomer.

It is found in the cytoplasm. It carries out the reaction tRNA(Arg) + L-arginine + ATP = L-arginyl-tRNA(Arg) + AMP + diphosphate. This chain is Arginine--tRNA ligase, found in Symbiobacterium thermophilum (strain DSM 24528 / JCM 14929 / IAM 14863 / T).